Reading from the N-terminus, the 509-residue chain is tRNA-2-methylthio-N(6)-dimethylallyladenosine synthase (509 aa).

The span at 1 to 15 (MNEQQRLASQQANSS) shows a compositional bias: polar residues. The segment at 1 to 25 (MNEQQRLASQQANSSTKKEEKDYSK) is disordered. Over residues 16–25 (TKKEEKDYSK) the composition is skewed to basic and acidic residues. Positions 66-184 (RKFYIRTYGC…LPYILKDAMF (119 aa)) constitute an MTTase N-terminal domain. Residues Cys-75, Cys-111, Cys-145, Cys-221, Cys-225, and Cys-228 each coordinate [4Fe-4S] cluster. Residues 207–437 (RRGDIKAWVN…NTLVNTLAIE (231 aa)) enclose the Radical SAM core domain. One can recognise a TRAM domain in the interval 440 to 503 (SRYKGQIVEV…TWSLNGELVE (64 aa)).

Belongs to the methylthiotransferase family. MiaB subfamily. Monomer. [4Fe-4S] cluster serves as cofactor.

It localises to the cytoplasm. The enzyme catalyses N(6)-dimethylallyladenosine(37) in tRNA + (sulfur carrier)-SH + AH2 + 2 S-adenosyl-L-methionine = 2-methylsulfanyl-N(6)-dimethylallyladenosine(37) in tRNA + (sulfur carrier)-H + 5'-deoxyadenosine + L-methionine + A + S-adenosyl-L-homocysteine + 2 H(+). In terms of biological role, catalyzes the methylthiolation of N6-(dimethylallyl)adenosine (i(6)A), leading to the formation of 2-methylthio-N6-(dimethylallyl)adenosine (ms(2)i(6)A) at position 37 in tRNAs that read codons beginning with uridine. The chain is tRNA-2-methylthio-N(6)-dimethylallyladenosine synthase from Bacillus cereus (strain B4264).